The chain runs to 180 residues: Putative manganese efflux pump MntP (180 aa).

6 helical membrane passes run 6–26 (LMAL…GIGL), 34–54 (ILQI…TGWL), 67–87 (AAVI…WAAW), 102–122 (FWGL…AGFT), 131–151 (LLAA…GLVF), and 160–180 (GERA…KLFF).

Belongs to the MntP (TC 9.B.29) family.

The protein resides in the cell membrane. Functionally, probably functions as a manganese efflux pump. The protein is Putative manganese efflux pump MntP of Pelotomaculum thermopropionicum (strain DSM 13744 / JCM 10971 / SI).